We begin with the raw amino-acid sequence, 232 residues long: Large ribosomal subunit protein uL1 (232 aa).

Belongs to the universal ribosomal protein uL1 family. Part of the 50S ribosomal subunit.

In terms of biological role, binds directly to 23S rRNA. The L1 stalk is quite mobile in the ribosome, and is involved in E site tRNA release. Protein L1 is also a translational repressor protein, it controls the translation of the L11 operon by binding to its mRNA. The polypeptide is Large ribosomal subunit protein uL1 (Pelotomaculum thermopropionicum (strain DSM 13744 / JCM 10971 / SI)).